The sequence spans 140 residues: Mercuric transport protein MerC (140 aa).

Residues Gly2–Lys10 are Cytoplasmic-facing. Residues Thr11–Ala31 form a helical membrane-spanning segment. 2 residues coordinate Hg(2+): Gly22 and Ala25. The Periplasmic portion of the chain corresponds to Ser32–Glu46. Residues Gly47–Leu67 form a helical membrane-spanning segment. The Cytoplasmic segment spans residues Gly68–Ser78. The helical transmembrane segment at Leu79 to Trp99 threads the bilayer. The Periplasmic portion of the chain corresponds to Trp100 to Tyr106. A helical membrane pass occupies residues Val107 to Arg127. The Cytoplasmic portion of the chain corresponds to Cys128–Leu140.

The protein resides in the cell inner membrane. Uptake of Hg(2+) is decreased by iodoacetamide and iodoacetate, and is completely inhibited by the thiol-modifying reagent N-ethylmaleimide (NEM). In terms of biological role, involved in mercuric ion uptake and binding. MerC-mediated Hg(2+) uptake does not require MerP. In Shigella flexneri, this protein is Mercuric transport protein MerC.